The chain runs to 697 residues: Histone deacetylase HOS3 (697 aa).

The interval 40–440 (AKAVVVLSPY…LIGLQNQDWV (401 aa)) is histone deacetylase. The active site involves His-196. Residues 525–573 (IRSHRSNASPEKELHENKPRSTEKQEQREIRSDTKVKQLSSNNRAAETQ) form a disordered region. The segment covering 534–560 (PEKELHENKPRSTEKQEQREIRSDTKV) has biased composition (basic and acidic residues). Over residues 561–573 (KQLSSNNRAAETQ) the composition is skewed to polar residues. 4 positions are modified to phosphoserine: Ser-582, Ser-583, Ser-613, and Ser-629. Positions 625–638 (GDEDSDHELKEKNW) are enriched in basic and acidic residues. The segment at 625-697 (GDEDSDHELK…KHTTRSGGRW (73 aa)) is disordered. A compositionally biased stretch (polar residues) spans 665-674 (QPQNANTPTY).

This sequence belongs to the histone deacetylase family. HD type 1 subfamily. In terms of assembly, homodimer.

Its subcellular location is the nucleus. The enzyme catalyses N(6)-acetyl-L-lysyl-[histone] + H2O = L-lysyl-[histone] + acetate. Responsible for the deacetylation of lysine residues on the N-terminal part of the core histones (H2A, H2B, H3 and H4). Histone deacetylation gives a tag for epigenetic repression and plays an important role in transcriptional regulation, cell cycle progression and developmental events. Histone deacetylases act via the formation of large multiprotein complexes. The polypeptide is Histone deacetylase HOS3 (HOS3) (Saccharomyces cerevisiae (strain ATCC 204508 / S288c) (Baker's yeast)).